We begin with the raw amino-acid sequence, 259 residues long: Tryptophan synthase alpha chain (259 aa).

Active-site proton acceptor residues include glutamate 48 and aspartate 59.

It belongs to the TrpA family. As to quaternary structure, tetramer of two alpha and two beta chains.

The catalysed reaction is (1S,2R)-1-C-(indol-3-yl)glycerol 3-phosphate + L-serine = D-glyceraldehyde 3-phosphate + L-tryptophan + H2O. The protein operates within amino-acid biosynthesis; L-tryptophan biosynthesis; L-tryptophan from chorismate: step 5/5. In terms of biological role, the alpha subunit is responsible for the aldol cleavage of indoleglycerol phosphate to indole and glyceraldehyde 3-phosphate. This is Tryptophan synthase alpha chain from Syntrophomonas wolfei subsp. wolfei (strain DSM 2245B / Goettingen).